A 255-amino-acid polypeptide reads, in one-letter code: Ribonuclease HII (255 aa).

Positions 72-255 (AIICGIDEVG…KSFEPIKSLL (184 aa)) constitute an RNase H type-2 domain. A divalent metal cation is bound by residues D78, E79, and D170.

This sequence belongs to the RNase HII family. Mn(2+) is required as a cofactor. It depends on Mg(2+) as a cofactor.

It localises to the cytoplasm. It carries out the reaction Endonucleolytic cleavage to 5'-phosphomonoester.. Functionally, endonuclease that specifically degrades the RNA of RNA-DNA hybrids. This chain is Ribonuclease HII, found in Staphylococcus aureus (strain USA300).